Reading from the N-terminus, the 724-residue chain is Phenylalanine ammonia-lyase (724 aa).

The active-site Proton donor/acceptor is Tyr-91. Positions 205-207 form a cross-link, 5-imidazolinone (Ala-Gly); sequence ASG. Ser-206 carries the 2,3-didehydroalanine (Ser) modification. The (E)-cinnamate site is built by Asn-265, Gln-357, Arg-363, Asn-393, Lys-467, Glu-495, and Asn-498.

This sequence belongs to the PAL/histidase family. In terms of assembly, homotetramer. In terms of processing, contains an active site 4-methylidene-imidazol-5-one (MIO), which is formed autocatalytically by cyclization and dehydration of residues Ala-Ser-Gly.

The protein localises to the cytoplasm. It catalyses the reaction L-phenylalanine = (E)-cinnamate + NH4(+). It functions in the pathway phenylpropanoid metabolism; trans-cinnamate biosynthesis; trans-cinnamate from L-phenylalanine: step 1/1. Catalyzes the non-oxidative deamination of L-phenylalanine to form trans-cinnamic acid and a free ammonium ion. Facilitates the commitment step in phenylpropanoid pathways that produce secondary metabolites such as lignins, coumarins and flavonoids. The chain is Phenylalanine ammonia-lyase (PAL1) from Mycosarcoma maydis (Corn smut fungus).